The sequence spans 345 residues: Dihydroorotase (345 aa).

Residues histidine 13 and histidine 15 each contribute to the Zn(2+) site. Substrate-binding positions include 15–17 (HLR) and asparagine 41. Residues lysine 99, histidine 136, and histidine 174 each coordinate Zn(2+). At lysine 99 the chain carries N6-carboxylysine. Histidine 136 is a binding site for substrate. A substrate-binding site is contributed by leucine 219. Aspartate 247 is a binding site for Zn(2+). Aspartate 247 is a catalytic residue. Residues histidine 251 and alanine 263 each coordinate substrate.

This sequence belongs to the metallo-dependent hydrolases superfamily. DHOase family. Class II DHOase subfamily. As to quaternary structure, homodimer. It depends on Zn(2+) as a cofactor.

It catalyses the reaction (S)-dihydroorotate + H2O = N-carbamoyl-L-aspartate + H(+). The protein operates within pyrimidine metabolism; UMP biosynthesis via de novo pathway; (S)-dihydroorotate from bicarbonate: step 3/3. Functionally, catalyzes the reversible cyclization of carbamoyl aspartate to dihydroorotate. This is Dihydroorotase from Agrobacterium fabrum (strain C58 / ATCC 33970) (Agrobacterium tumefaciens (strain C58)).